The sequence spans 252 residues: Ribosomal RNA small subunit methyltransferase A (252 aa).

N11, L13, G38, E60, D82, and N99 together coordinate S-adenosyl-L-methionine.

It belongs to the class I-like SAM-binding methyltransferase superfamily. rRNA adenine N(6)-methyltransferase family. RsmA subfamily.

It localises to the cytoplasm. It carries out the reaction adenosine(1518)/adenosine(1519) in 16S rRNA + 4 S-adenosyl-L-methionine = N(6)-dimethyladenosine(1518)/N(6)-dimethyladenosine(1519) in 16S rRNA + 4 S-adenosyl-L-homocysteine + 4 H(+). Specifically dimethylates two adjacent adenosines (A1518 and A1519) in the loop of a conserved hairpin near the 3'-end of 16S rRNA in the 30S particle. May play a critical role in biogenesis of 30S subunits. The chain is Ribosomal RNA small subunit methyltransferase A from Hydrogenobaculum sp. (strain Y04AAS1).